The following is an 83-amino-acid chain: Small ribosomal subunit protein bS21 (83 aa).

The segment at 40-83 (TPMDERRRKARSASKRNKVKWRYSNKSEETASETAETPASAPEA) is disordered. The segment covering 47 to 62 (RKARSASKRNKVKWRY) has biased composition (basic residues). Low complexity predominate over residues 71 to 83 (SETAETPASAPEA).

The protein belongs to the bacterial ribosomal protein bS21 family.

This chain is Small ribosomal subunit protein bS21, found in Akkermansia muciniphila (strain ATCC BAA-835 / DSM 22959 / JCM 33894 / BCRC 81048 / CCUG 64013 / CIP 107961 / Muc).